Reading from the N-terminus, the 217-residue chain is Tegument protein BKRF4 (217 aa).

The interval 1–217 is disordered; it reads MAMFLKSRGV…GNNNYNWPWL (217 aa). Polar residues predominate over residues 32-42; that stretch reads YTLGSQASQSI. The segment covering 43 to 79 has biased composition (acidic residues); that stretch reads QEEDVSDTDESDYSDEDEEIDLEEEYPSDEDPSEGSD. Residues 63–64 are interaction with host histones H3/H4; sequence DL. An interaction with host H2A/H2B region spans residues 81 to 84; sequence DPSW. The segment covering 89–102 has biased composition (acidic residues); the sequence is SDESDYSESDEDEA. Positions 106-132 are enriched in low complexity; it reads SQASRSSRVSPSTQQSSGLTPTPSFSR. Over residues 136 to 145 the composition is skewed to pro residues; sequence RAPPRPPAPA. A compositionally biased stretch (polar residues) spans 208–217; it reads GNNNYNWPWL.

The protein belongs to the lymphocryptovirus BKRF4 family. In terms of assembly, forms a complex with the host H3/H4 dimer and histone chaperone ASF1. Also forms a complex with host H2A/H2B dimer. Interacts (via C-terminus) with BGLF2; this interaction is important for infectious virion production.

Its subcellular location is the virion tegument. The protein localises to the host nucleus. The protein resides in the host cytoplasm. It is found in the host perinuclear region. In terms of biological role, histone-binding protein that binds to histones H2A/H2B, H3/H4 and cellular chromatin to overcome the host DNA damage response triggered by the viral genome ends. Interferes with histone ubiquitination and recruitment of repair proteins. This Epstein-Barr virus (strain GD1) (HHV-4) protein is Tegument protein BKRF4.